Consider the following 853-residue polypeptide: DNA mismatch repair protein MutS (853 aa).

An ATP-binding site is contributed by 614 to 621 (GPNMGGKS).

It belongs to the DNA mismatch repair MutS family.

Functionally, this protein is involved in the repair of mismatches in DNA. It is possible that it carries out the mismatch recognition step. This protein has a weak ATPase activity. The chain is DNA mismatch repair protein MutS from Enterobacter sp. (strain 638).